The following is a 341-amino-acid chain: Radial spoke head 14 homolog (341 aa).

ARM repeat units follow at residues 16–55 (PTKAAIAYGCRALSKLNEELQSRDLLTRQKALVALCDLMH), 57–96 (PEYVYEAINIGCLESLKTLLQDDDNLVRIKTTEVLYIMAT), 99–138 (VGRVGFLKHDIIQALSLLLSDHQTLCRENLHQAYKHLAQL), 139–178 (PKGAQGIVQSGLIPSLVRKLQKEEDHIQEIILDTLALCLQ), 180–217 (DATEALESQAVPCLKEKLLSQNSEIRSKAARALIAISI), 219–258 (LDGKNQVWKNKVIPILVTLLSDTDEEVKANAAGALMHATV), 260–300 (TEGK…MLAE), and 302–339 (PEGRKLLLSHVPIFRYLLAHKNEAIQRAAEVAIKVIEW).

It belongs to the flagellar radial spoke RSP14 family. As to quaternary structure, component of the axonemal radial spoke complex 1 (RS1), at least composed of spoke head proteins RSPH1, RSPH3, RSPH9 and the cilia-specific component RSPH4A or sperm-specific component RSPH6A, spoke stalk proteins RSPH14, DNAJB13, DYDC1, ROPN1L and NME5, and the anchor protein IQUB.

It localises to the cytoplasm. The protein resides in the cytoskeleton. The protein localises to the flagellum axoneme. Functionally, functions as part of axonemal radial spoke complexes that play an important part in the motility of sperm and cilia. The protein is Radial spoke head 14 homolog of Mus musculus (Mouse).